The primary structure comprises 152 residues: SsrA-binding protein (152 aa).

It belongs to the SmpB family.

The protein localises to the cytoplasm. Functionally, required for rescue of stalled ribosomes mediated by trans-translation. Binds to transfer-messenger RNA (tmRNA), required for stable association of tmRNA with ribosomes. tmRNA and SmpB together mimic tRNA shape, replacing the anticodon stem-loop with SmpB. tmRNA is encoded by the ssrA gene; the 2 termini fold to resemble tRNA(Ala) and it encodes a 'tag peptide', a short internal open reading frame. During trans-translation Ala-aminoacylated tmRNA acts like a tRNA, entering the A-site of stalled ribosomes, displacing the stalled mRNA. The ribosome then switches to translate the ORF on the tmRNA; the nascent peptide is terminated with the 'tag peptide' encoded by the tmRNA and targeted for degradation. The ribosome is freed to recommence translation, which seems to be the essential function of trans-translation. The protein is SsrA-binding protein of Rickettsia bellii (strain RML369-C).